The sequence spans 190 residues: Pancreatic IgW, short secretory form (190 aa).

The 93-residue stretch at 53–145 folds into the Ig-like C1-type domain; that stretch reads PNITALVPSV…PPSNFRSMIS (93 aa). Residue N54 is glycosylated (N-linked (GlcNAc...) asparagine). Residues C74 and C131 are joined by a disulfide bond. N-linked (GlcNAc...) asparagine glycosylation occurs at N179.

Expressed in pancreas, spleen, epigonal organ and at low levels in several other tissues.

It is found in the secreted. The chain is Pancreatic IgW, short secretory form from Ginglymostoma cirratum (Nurse shark).